Here is a 418-residue protein sequence, read N- to C-terminus: Dual-specificity RNA methyltransferase RlmN (418 aa).

The interval 1–21 (MADTSLMPIPGQVDPVPAPRD) is disordered. Glu-122 serves as the catalytic Proton acceptor. The 256-residue stretch at 128–383 (DADRGTLCVS…APVRTPRGRD (256 aa)) folds into the Radical SAM core domain. A disulfide bond links Cys-135 and Cys-388. The [4Fe-4S] cluster site is built by Cys-142, Cys-146, and Cys-149. Residues 212-213 (GE), Ser-244, 266-268 (SLH), and Asn-345 each bind S-adenosyl-L-methionine. Cys-388 functions as the S-methylcysteine intermediate in the catalytic mechanism. The segment at 393–418 (TAAQKKSRAERDREAAAEAEAAASQA) is disordered. The span at 399 to 408 (SRAERDREAA) shows a compositional bias: basic and acidic residues.

This sequence belongs to the radical SAM superfamily. RlmN family. [4Fe-4S] cluster is required as a cofactor.

It is found in the cytoplasm. It carries out the reaction adenosine(2503) in 23S rRNA + 2 reduced [2Fe-2S]-[ferredoxin] + 2 S-adenosyl-L-methionine = 2-methyladenosine(2503) in 23S rRNA + 5'-deoxyadenosine + L-methionine + 2 oxidized [2Fe-2S]-[ferredoxin] + S-adenosyl-L-homocysteine. The catalysed reaction is adenosine(37) in tRNA + 2 reduced [2Fe-2S]-[ferredoxin] + 2 S-adenosyl-L-methionine = 2-methyladenosine(37) in tRNA + 5'-deoxyadenosine + L-methionine + 2 oxidized [2Fe-2S]-[ferredoxin] + S-adenosyl-L-homocysteine. Specifically methylates position 2 of adenine 2503 in 23S rRNA and position 2 of adenine 37 in tRNAs. m2A2503 modification seems to play a crucial role in the proofreading step occurring at the peptidyl transferase center and thus would serve to optimize ribosomal fidelity. This chain is Dual-specificity RNA methyltransferase RlmN, found in Erythrobacter litoralis (strain HTCC2594).